The primary structure comprises 356 residues: 3-isopropylmalate dehydrogenase (356 aa).

Substrate contacts are provided by Arg91, Arg101, Arg129, and Asp223. Mg(2+)-binding residues include Asp223, Asp247, and Asp251. 281 to 293 (GSAPDIAGKGIAN) contacts NAD(+).

Belongs to the isocitrate and isopropylmalate dehydrogenases family. LeuB type 1 subfamily. In terms of assembly, homodimer. The cofactor is Mg(2+). It depends on Mn(2+) as a cofactor.

The protein localises to the cytoplasm. The enzyme catalyses (2R,3S)-3-isopropylmalate + NAD(+) = 4-methyl-2-oxopentanoate + CO2 + NADH. The protein operates within amino-acid biosynthesis; L-leucine biosynthesis; L-leucine from 3-methyl-2-oxobutanoate: step 3/4. Functionally, catalyzes the oxidation of 3-carboxy-2-hydroxy-4-methylpentanoate (3-isopropylmalate) to 3-carboxy-4-methyl-2-oxopentanoate. The product decarboxylates to 4-methyl-2 oxopentanoate. This chain is 3-isopropylmalate dehydrogenase, found in Ralstonia nicotianae (strain ATCC BAA-1114 / GMI1000) (Ralstonia solanacearum).